The chain runs to 518 residues: 12S seed storage globulin 1 (518 aa).

An N-terminal signal peptide occupies residues 1-24; that stretch reads MATTRFPSLLFYSCIFLLCNGSMA. 2 disulfides stabilise this stretch: Cys-45–Cys-78 and Cys-121–Cys-324. The 191-residue stretch at 50 to 240 folds into the Cupin type-1 1 domain; that stretch reads LQAFEPLRQV…ALGISQQAAQ (191 aa). A compositionally biased stretch (low complexity) spans 281 to 295; sequence QSQQEQSTQYQVGQS. Residues 281-311 are disordered; it reads QSQQEQSTQYQVGQSPQYQEGQSTQYQSGQS. The span at 296–311 shows a compositional bias: polar residues; sequence PQYQEGQSTQYQSGQS. The region spanning 330 to 479 is the Cupin type-1 2 domain; it reads QNIENPKRAD…AYRISRQESQ (150 aa). A disordered region spans residues 496–518; that stretch reads FAQTGSQSYQDEGESSSTEKASE.

This sequence belongs to the 11S seed storage protein (globulins) family. As to quaternary structure, hexamer; each subunit is composed of an acidic and a basic chain derived from a single precursor and linked by a disulfide bond.

This is a seed storage protein. This Avena sativa (Oat) protein is 12S seed storage globulin 1.